Here is a 432-residue protein sequence, read N- to C-terminus: 3-phosphoshikimate 1-carboxyvinyltransferase (432 aa).

3-phosphoshikimate contacts are provided by Lys22, Ser23, and Arg27. Lys22 serves as a coordination point for phosphoenolpyruvate. Residues Gly96 and Arg127 each coordinate phosphoenolpyruvate. 3-phosphoshikimate contacts are provided by Ser173, Ser174, Gln175, Ser201, Asp316, Asn339, and Lys343. Gln175 serves as a coordination point for phosphoenolpyruvate. The active-site Proton acceptor is Asp316. The phosphoenolpyruvate site is built by Arg347, Arg391, and Lys416.

It belongs to the EPSP synthase family. As to quaternary structure, monomer.

Its subcellular location is the cytoplasm. It carries out the reaction 3-phosphoshikimate + phosphoenolpyruvate = 5-O-(1-carboxyvinyl)-3-phosphoshikimate + phosphate. It functions in the pathway metabolic intermediate biosynthesis; chorismate biosynthesis; chorismate from D-erythrose 4-phosphate and phosphoenolpyruvate: step 6/7. In terms of biological role, catalyzes the transfer of the enolpyruvyl moiety of phosphoenolpyruvate (PEP) to the 5-hydroxyl of shikimate-3-phosphate (S3P) to produce enolpyruvyl shikimate-3-phosphate and inorganic phosphate. The sequence is that of 3-phosphoshikimate 1-carboxyvinyltransferase from Histophilus somni (strain 2336) (Haemophilus somnus).